A 662-amino-acid polypeptide reads, in one-letter code: Polyunsaturated fatty acid (12S)/(13S)-lipoxygenase, epidermal-type (662 aa).

The 113-residue stretch at 2–114 (VKYKILVATG…TICLTEGTAL (113 aa)) folds into the PLAT domain. The region spanning 115–662 (KVTDDTQNLF…PSLVENSVTI (548 aa)) is the Lipoxygenase domain. Residues His360, His365, His540, and Ile662 each coordinate Fe cation.

The protein belongs to the lipoxygenase family. The cofactor is Fe cation. Expressed in epidermis.

Its subcellular location is the cytoplasm. It catalyses the reaction (5Z,8Z,11Z,14Z)-eicosatetraenoate + O2 = (12S)-hydroperoxy-(5Z,8Z,10E,14Z)-eicosatetraenoate. The enzyme catalyses 1-O-methyl-(9Z,12Z)-octadecadienoate + O2 = 1-O-methyl-(13S)-hydroperoxy-(9Z,11E)-octadecadienoate. It carries out the reaction (8Z,11Z,14Z)-eicosatrienoate + O2 = (12S)-hydroperoxy-(8Z,10E,14Z)-eicosatrienoate. The catalysed reaction is (5Z,8Z,11Z)-eicosatrienoate + O2 = (12S)-hydroperoxy-(5Z,8Z,10E)-eicosatrienoate. It catalyses the reaction 1-O-methyl-(5Z,8Z,11Z,14Z)-eicosatetraenoate + O2 = 1-O-methyl-(12S)-hydroperoxy-(5Z,8Z,10E,14Z)-eicosatetraenoate. The enzyme catalyses (9Z,12Z)-octadecadienoate + O2 = (13S)-hydroperoxy-(9Z,11E)-octadecadienoate. It carries out the reaction (4Z,7Z,10Z,13Z,16Z,19Z)-docosahexaenoate + O2 = (14S)-hydroperoxy-(4Z,7Z,10Z,12E,16Z,19Z)-docosahexaenoate. The protein operates within lipid metabolism; hydroperoxy eicosatetraenoic acid biosynthesis. Arachidonate 12-lipoxygenase activity is decreased when the pH decreases from 7.4 to 6.0. Its function is as follows. Catalyzes the regio and stereo-specific incorporation of a single molecule of dioxygen into free and esterified polyunsaturated fatty acids generating lipid hydroperoxides that can be further reduced to the corresponding hydroxy species. Shows increasing catalytic activity within the series arachidonic acid &lt; 5,8,11-eicosatrienoic acid &lt; linoleic acid &lt; 8,11,14-eicosatrienoic acid. The sequence is that of Polyunsaturated fatty acid (12S)/(13S)-lipoxygenase, epidermal-type from Mus musculus (Mouse).